We begin with the raw amino-acid sequence, 258 residues long: MELIRVLANLLILQLSYAQKSSELVFGGDECNINEHRSLVVLFNSNGFLCGGTLINQDWVVTAAHCDSNNFQLLFGVHSKKILNEDEQTRDPKEKFFCPNRKKDDEVDKDIMLIKLDSSVSNSEHIAPLSLPSSPPSVGSVCRIMGWGKTIPTKEIYPDVPHCANINILDHAVCRTAYSWRQVANTTLCAGILQGGRDTCHFDSGGPLICNGIFQGIVSWGGHPCGQPGEPGVYTKVFDYLDWIKSIIAGNKDATCPP.

Positions 1–18 are cleaved as a signal peptide; sequence MELIRVLANLLILQLSYA. The propeptide occupies 19 to 24; it reads QKSSEL. The region spanning 25–249 is the Peptidase S1 domain; that stretch reads VFGGDECNIN…YLDWIKSIIA (225 aa). 6 disulfide bridges follow: Cys-31–Cys-163, Cys-50–Cys-66, Cys-98–Cys-256, Cys-142–Cys-210, Cys-174–Cys-189, and Cys-200–Cys-225. Residues His-65 and Asp-110 each act as charge relay system in the active site. A glycan (N-linked (GlcNAc...) asparagine) is linked at Asn-185. The active-site Charge relay system is Ser-204.

This sequence belongs to the peptidase S1 family. Snake venom subfamily. As to quaternary structure, monomer. In terms of tissue distribution, expressed by the venom gland.

Its subcellular location is the secreted. Snake venom serine protease that activates plasminogen. The sequence is that of Venom plasminogen activator TSV-PA from Trimeresurus stejnegeri (Chinese green tree viper).